The following is a 770-amino-acid chain: Arf-GAP with coiled-coil, ANK repeat and PH domain-containing protein 2 (770 aa).

Residues 6–226 (DFEECLKDSP…MKDLGAQLDR (221 aa)) enclose the BAR domain. The 96-residue stretch at 266–361 (GIVMEGYLFK…WIKAVQTSIA (96 aa)) folds into the PH domain. The disordered stretch occupies residues 371–392 (SEKLDKKSSPSTGSLDSGSESK). Positions 379-388 (SPSTGSLDSG) are enriched in low complexity. Phosphoserine occurs at positions 384 and 387. An Arf-GAP domain is found at 399 to 520 (ESALQRVQCI…KFVDKYSTLL (122 aa)). The segment at 414–437 (CCDCGLADPRWASINLGITLCIEC) adopts a C4-type zinc-finger fold. Ser-521 carries the phosphoserine modification. The segment covering 548–561 (TPVKSNDSGIQQCS) has biased composition (polar residues). The disordered stretch occupies residues 548-571 (TPVKSNDSGIQQCSDDGRESLPST). Phosphoserine is present on residues Ser-573 and Ser-576. 3 ANK repeats span residues 632 to 661 (NQAT…NVNQ), 665 to 694 (QGRG…NQHA), and 698 to 727 (EGKD…NEEM). Tyr-734 bears the Phosphotyrosine mark. At Ser-767 the chain carries Phosphoserine.

As to quaternary structure, interacts with RAB35 (GTP-bound form); the interaction is direct and probably recruits ACAP2 to membranes. Interacts with MICALL1; the interaction is indirect through RAB35.

Its subcellular location is the endosome membrane. The protein resides in the cell membrane. With respect to regulation, GAP activity stimulated by phosphatidylinositol 4,5-bisphosphate (PIP2) and phosphatidic acid. Its function is as follows. GTPase-activating protein (GAP) for ADP ribosylation factor 6 (ARF6). Doesn't show GAP activity for RAB35. In Rattus norvegicus (Rat), this protein is Arf-GAP with coiled-coil, ANK repeat and PH domain-containing protein 2 (Acap2).